The following is a 267-amino-acid chain: Tryptophan synthase alpha chain (267 aa).

Active-site proton acceptor residues include Glu-49 and Asp-60.

It belongs to the TrpA family. In terms of assembly, tetramer of two alpha and two beta chains.

It catalyses the reaction (1S,2R)-1-C-(indol-3-yl)glycerol 3-phosphate + L-serine = D-glyceraldehyde 3-phosphate + L-tryptophan + H2O. Its pathway is amino-acid biosynthesis; L-tryptophan biosynthesis; L-tryptophan from chorismate: step 5/5. The alpha subunit is responsible for the aldol cleavage of indoleglycerol phosphate to indole and glyceraldehyde 3-phosphate. This chain is Tryptophan synthase alpha chain, found in Cyanothece sp. (strain PCC 7425 / ATCC 29141).